The sequence spans 220 residues: Putative F-box protein At3g20705 (220 aa).

One can recognise an F-box domain in the interval 1–51; the sequence is MMMMSNLPNDLVEEILSRVTVTFMRTVRSICKKWNALTKDRSFTNKYIRNI.

This chain is Putative F-box protein At3g20705, found in Arabidopsis thaliana (Mouse-ear cress).